Consider the following 111-residue polypeptide: MIIGVGIDVVSIDRFQAKKSDEFIKKLLTEHEQNKYKTVIGESNQNIFLAIRWSLKEAIFKALKTWDEFTQLEIRKIHGAYECSLNEKIKLHLSISHEGQRLVAMAVAERI.

The Mg(2+) site is built by aspartate 8 and glutamate 57.

It belongs to the P-Pant transferase superfamily. AcpS family. It depends on Mg(2+) as a cofactor.

The protein resides in the cytoplasm. It carries out the reaction apo-[ACP] + CoA = holo-[ACP] + adenosine 3',5'-bisphosphate + H(+). In terms of biological role, transfers the 4'-phosphopantetheine moiety from coenzyme A to a Ser of acyl-carrier-protein. The chain is Holo-[acyl-carrier-protein] synthase from Mycoplasmoides gallisepticum (strain R(low / passage 15 / clone 2)) (Mycoplasma gallisepticum).